Reading from the N-terminus, the 255-residue chain is tRNA (guanine-N(7)-)-methyltransferase (255 aa).

The tract at residues 1–30 (MMHDDPNEAGLPPDDAALPDEAADGADEVN) is disordered. Over residues 17 to 27 (ALPDEAADGAD) the composition is skewed to acidic residues. 4 residues coordinate S-adenosyl-L-methionine: E86, E111, D138, and D161. The active site involves D161. Substrate contacts are provided by residues K165, D197, and 232 to 235 (TKFE).

This sequence belongs to the class I-like SAM-binding methyltransferase superfamily. TrmB family.

It carries out the reaction guanosine(46) in tRNA + S-adenosyl-L-methionine = N(7)-methylguanosine(46) in tRNA + S-adenosyl-L-homocysteine. It functions in the pathway tRNA modification; N(7)-methylguanine-tRNA biosynthesis. Functionally, catalyzes the formation of N(7)-methylguanine at position 46 (m7G46) in tRNA. The chain is tRNA (guanine-N(7)-)-methyltransferase from Burkholderia vietnamiensis (strain G4 / LMG 22486) (Burkholderia cepacia (strain R1808)).